The following is a 509-amino-acid chain: NAD-dependent histone deacetylase SIR2 (509 aa).

Residues 1–35 form a disordered region; the sequence is MIISRGSHVDEEPVAKKPRISVGEMTDDTTDDGLN. Positions 25–35 are enriched in acidic residues; the sequence is MTDDTTDDGLN. Positions 185 to 476 constitute a Deacetylase sirtuin-type domain; sequence RLSNFYTIDH…TVVAQKCEWD (292 aa). NAD(+)-binding positions include 210 to 229 and 292 to 295; these read GAGV…EGFY and QNID. The Proton acceptor role is filled by His-312. Residues Cys-320, Cys-323, Cys-344, and Cys-347 each contribute to the Zn(2+) site. Residues 420–422, 445–447, and Cys-462 each bind NAD(+); these read GTS and NKD.

The protein belongs to the sirtuin family. Class I subfamily. Requires Zn(2+) as cofactor.

The protein resides in the nucleus. The catalysed reaction is N(6)-acetyl-L-lysyl-[protein] + NAD(+) + H2O = 2''-O-acetyl-ADP-D-ribose + nicotinamide + L-lysyl-[protein]. NAD-dependent deacetylase. Heterochromatin component that silences transcription at silent mating loci, telomeres and the ribosomal DNA, and that also suppresses recombination in the rDNA and extends replicative life span. It acts as a NAD-dependent histone deacetylase, which deacetylates 'Lys-9' and 'Lys-14' of Histone H3 and 'Lys-16' of Histone H4. The sequence is that of NAD-dependent histone deacetylase SIR2 (SIR2) from Candida glabrata (strain ATCC 2001 / BCRC 20586 / JCM 3761 / NBRC 0622 / NRRL Y-65 / CBS 138) (Yeast).